A 257-amino-acid chain; its full sequence is Imidazole glycerol phosphate synthase subunit HisF (257 aa).

Active-site residues include Asp-11 and Asp-130.

The protein belongs to the HisA/HisF family. In terms of assembly, heterodimer of HisH and HisF.

The protein resides in the cytoplasm. The enzyme catalyses 5-[(5-phospho-1-deoxy-D-ribulos-1-ylimino)methylamino]-1-(5-phospho-beta-D-ribosyl)imidazole-4-carboxamide + L-glutamine = D-erythro-1-(imidazol-4-yl)glycerol 3-phosphate + 5-amino-1-(5-phospho-beta-D-ribosyl)imidazole-4-carboxamide + L-glutamate + H(+). The protein operates within amino-acid biosynthesis; L-histidine biosynthesis; L-histidine from 5-phospho-alpha-D-ribose 1-diphosphate: step 5/9. Functionally, IGPS catalyzes the conversion of PRFAR and glutamine to IGP, AICAR and glutamate. The HisF subunit catalyzes the cyclization activity that produces IGP and AICAR from PRFAR using the ammonia provided by the HisH subunit. The chain is Imidazole glycerol phosphate synthase subunit HisF from Proteus mirabilis (strain HI4320).